Consider the following 338-residue polypeptide: Photosystem II assembly lipoprotein Ycf48 (338 aa).

A signal peptide spans 1-23 (MKRLFSNVINLTLVLIVGVALSG). A lipid anchor (N-palmitoyl cysteine) is attached at Cys24. Cys24 carries S-diacylglycerol cysteine lipidation.

It belongs to the Ycf48 family. Part of early PSII assembly complexes which includes D1 (psbA) and PsbI; not found in mature PSII. Binds to the lumenal side of PSII complexes. Interacts with YidC.

The protein localises to the cellular thylakoid membrane. Functionally, a factor required for optimal assembly of photosystem II (PSII), acting in the early stages of PSII assembly. Also plays a role in replacement of photodamaged D1 (psbA). Assists YidC in synthesis of chlorophyll-binding proteins. The chain is Photosystem II assembly lipoprotein Ycf48 from Prochlorococcus marinus (strain NATL2A).